The primary structure comprises 208 residues: Uracil phosphoribosyltransferase (208 aa).

Residues arginine 78, arginine 103, and 130-138 (DPMLATGGS) contribute to the 5-phospho-alpha-D-ribose 1-diphosphate site. Uracil-binding positions include isoleucine 193 and 198–200 (GDA). Residue aspartate 199 participates in 5-phospho-alpha-D-ribose 1-diphosphate binding.

It belongs to the UPRTase family. Requires Mg(2+) as cofactor.

The catalysed reaction is UMP + diphosphate = 5-phospho-alpha-D-ribose 1-diphosphate + uracil. Its pathway is pyrimidine metabolism; UMP biosynthesis via salvage pathway; UMP from uracil: step 1/1. Its activity is regulated as follows. Allosterically activated by GTP. Its function is as follows. Catalyzes the conversion of uracil and 5-phospho-alpha-D-ribose 1-diphosphate (PRPP) to UMP and diphosphate. In Shewanella woodyi (strain ATCC 51908 / MS32), this protein is Uracil phosphoribosyltransferase.